Here is an 805-residue protein sequence, read N- to C-terminus: Endonuclease MutS2 (805 aa).

344 to 351 (GPNGGGKT) is an ATP binding site. The tract at residues 705–724 (RSRSEKLQAASEARPSAPPG) is disordered. Residues 729–804 (LDVRGLRVEE…GDAVTVVSLR (76 aa)) form the Smr domain.

It belongs to the DNA mismatch repair MutS family. MutS2 subfamily. In terms of assembly, homodimer. Binds to stalled ribosomes, contacting rRNA.

In terms of biological role, endonuclease that is involved in the suppression of homologous recombination and thus may have a key role in the control of bacterial genetic diversity. Its function is as follows. Acts as a ribosome collision sensor, splitting the ribosome into its 2 subunits. Detects stalled/collided 70S ribosomes which it binds and splits by an ATP-hydrolysis driven conformational change. Acts upstream of the ribosome quality control system (RQC), a ribosome-associated complex that mediates the extraction of incompletely synthesized nascent chains from stalled ribosomes and their subsequent degradation. Probably generates substrates for RQC. In Anaeromyxobacter sp. (strain Fw109-5), this protein is Endonuclease MutS2.